We begin with the raw amino-acid sequence, 942 residues long: Leucine--tRNA ligase 1 (942 aa).

The 'HIGH' region signature appears at 39 to 49 (PYTNSPLHIGH). The short motif at 624-628 (KMSKS) is the 'KMSKS' region element. Lysine 627 contacts ATP.

Belongs to the class-I aminoacyl-tRNA synthetase family.

The protein localises to the cytoplasm. The enzyme catalyses tRNA(Leu) + L-leucine + ATP = L-leucyl-tRNA(Leu) + AMP + diphosphate. The sequence is that of Leucine--tRNA ligase 1 from Sulfolobus acidocaldarius (strain ATCC 33909 / DSM 639 / JCM 8929 / NBRC 15157 / NCIMB 11770).